The following is a 318-amino-acid chain: Ribonuclease Z (318 aa).

Zn(2+)-binding residues include His63, His65, Asp67, His68, His142, Asp210, and His268. Asp67 functions as the Proton acceptor in the catalytic mechanism.

The protein belongs to the RNase Z family. Homodimer. The cofactor is Zn(2+).

The enzyme catalyses Endonucleolytic cleavage of RNA, removing extra 3' nucleotides from tRNA precursor, generating 3' termini of tRNAs. A 3'-hydroxy group is left at the tRNA terminus and a 5'-phosphoryl group is left at the trailer molecule.. In terms of biological role, zinc phosphodiesterase, which displays some tRNA 3'-processing endonuclease activity. Probably involved in tRNA maturation, by removing a 3'-trailer from precursor tRNA. In Thermobifida fusca (strain YX), this protein is Ribonuclease Z.